The primary structure comprises 83 residues: NAD(P)H-quinone oxidoreductase subunit L (83 aa).

Transmembrane regions (helical) follow at residues 15 to 35 and 53 to 73; these read LFVL…VPLA and LGVY…APFI.

It belongs to the complex I NdhL subunit family. In terms of assembly, NDH-1 can be composed of about 15 different subunits; different subcomplexes with different compositions have been identified which probably have different functions.

The protein resides in the cellular thylakoid membrane. It catalyses the reaction a plastoquinone + NADH + (n+1) H(+)(in) = a plastoquinol + NAD(+) + n H(+)(out). The enzyme catalyses a plastoquinone + NADPH + (n+1) H(+)(in) = a plastoquinol + NADP(+) + n H(+)(out). NDH-1 shuttles electrons from an unknown electron donor, via FMN and iron-sulfur (Fe-S) centers, to quinones in the respiratory and/or the photosynthetic chain. The immediate electron acceptor for the enzyme in this species is believed to be plastoquinone. Couples the redox reaction to proton translocation, and thus conserves the redox energy in a proton gradient. Cyanobacterial NDH-1 also plays a role in inorganic carbon-concentration. The polypeptide is NAD(P)H-quinone oxidoreductase subunit L (Synechococcus sp. (strain CC9902)).